A 96-amino-acid polypeptide reads, in one-letter code: Secretoglobin family 2B member 2 (96 aa).

The N-terminal stretch at 1–23 (MRVTSATCALLLALICSVQLGDA) is a signal peptide.

It belongs to the secretoglobin family.

Its subcellular location is the secreted. The protein is Secretoglobin family 2B member 2 (SCGB2B2) of Homo sapiens (Human).